The following is a 42-amino-acid chain: Photosystem I reaction center subunit IX (42 aa).

A helical membrane pass occupies residues 7 to 27 (YLSTAPVLAAIWFGILAGLLI).

It belongs to the PsaJ family.

It localises to the plastid. The protein localises to the chloroplast thylakoid membrane. May help in the organization of the PsaE and PsaF subunits. The protein is Photosystem I reaction center subunit IX of Staurastrum punctulatum (Green alga).